The primary structure comprises 299 residues: MLHSAHKGNEILVSLANAGVQRNGRWLVRGVEFSVSKGEIVTLIGPNGSGKSTSAKMAIGVAKPSEGKVSRKAGLRVGYVPQKLSVDWTMPLSVRRLMTLTGPLPAREIDAALNATGIAHLANAEVQHLSGGEFQRALLARAIARKPDLLVLDEPVQGVDFSGEIALYDLIKNIRNSNDCGILLISHDLHVVMAETDTVICLNGHVCCRGTPQAVSQSPEYMRLFGGTAAKALAVYSHHHDHTHLPDGRVQHADGTVTDHCHPEDGHHHDEDGECGCGHDHGEHGDHAPDGLRQGERHV.

The 216-residue stretch at 13 to 228 (VSLANAGVQR…PEYMRLFGGT (216 aa)) folds into the ABC transporter domain. An ATP-binding site is contributed by 45–52 (GPNGSGKS).

The protein belongs to the ABC transporter superfamily. Zinc importer (TC 3.A.1.15.5) family. As to quaternary structure, the complex is composed of two ATP-binding proteins (ZnuC), two transmembrane proteins (ZnuB) and a solute-binding protein (ZnuA).

The protein localises to the cell inner membrane. The catalysed reaction is Zn(2+)(out) + ATP(in) + H2O(in) = Zn(2+)(in) + ADP(in) + phosphate(in) + H(+)(in). Part of the ABC transporter complex ZnuABC involved in zinc import. Responsible for energy coupling to the transport system. The sequence is that of Zinc import ATP-binding protein ZnuC from Agrobacterium fabrum (strain C58 / ATCC 33970) (Agrobacterium tumefaciens (strain C58)).